The primary structure comprises 159 residues: Transcription antitermination protein NusB (159 aa).

The protein belongs to the NusB family.

Involved in transcription antitermination. Required for transcription of ribosomal RNA (rRNA) genes. Binds specifically to the boxA antiterminator sequence of the ribosomal RNA (rrn) operons. This Stenotrophomonas maltophilia (strain K279a) protein is Transcription antitermination protein NusB.